The following is a 242-amino-acid chain: MMMDLFETGSYFFYLDGENVTLQPLEVAEGSPLYPGSDGTLSPCQDQMPPEAGSDSSGEEHVLAPPGLQPPHCPGQCLIWACKTCKRKSAPTDRRKAATLRERRRLKKINEAFEALKRRTVANPNQRLPKVEILRSAINYIERLQDLLHRLDQQDKMQELGVDPFSYRPKQENLEGADFLRTCSSQWPSVSDHSRGLVITAKEGGTSIDSSASSSLRCLSSIVDSISSEEHKLPCVEEVVEK.

Residues 31–63 (SPLYPGSDGTLSPCQDQMPPEAGSDSSGEEHVL) are disordered. The bHLH domain occupies 93–144 (DRRKAATLRERRRLKKINEAFEALKRRTVANPNQRLPKVEILRSAINYIERL).

Efficient DNA binding requires dimerization with another bHLH protein. Interacts with CSRP3.

It is found in the nucleus. Functionally, involved in muscle differentiation (myogenic factor). Induces fibroblasts to differentiate into myoblasts. Probable sequence specific DNA-binding protein. This chain is Myogenic factor 6 (MYF6), found in Bos taurus (Bovine).